The chain runs to 113 residues: Iron-sulfur cluster insertion protein ErpA (113 aa).

3 residues coordinate iron-sulfur cluster: cysteine 41, cysteine 105, and cysteine 107.

Belongs to the HesB/IscA family. As to quaternary structure, homodimer. Iron-sulfur cluster serves as cofactor.

Required for insertion of 4Fe-4S clusters for at least IspG. The polypeptide is Iron-sulfur cluster insertion protein ErpA (Histophilus somni (strain 2336) (Haemophilus somnus)).